Reading from the N-terminus, the 62-residue chain is Potassium channel toxin alpha-KTx Tx773 (62 aa).

Positions M1–A18 are cleaved as a signal peptide. Intrachain disulfides connect C28–C46, C33–C59, and C37–C61.

Belongs to the short scorpion toxin superfamily. Potassium channel inhibitor family. Alpha-KTx 23 subfamily. In terms of tissue distribution, expressed by the venom gland.

Its subcellular location is the secreted. In terms of biological role, may block potassium channels. The polypeptide is Potassium channel toxin alpha-KTx Tx773 (Buthus israelis (Israeli scorpion)).